Reading from the N-terminus, the 1019-residue chain is MRQRDLKFTFVVGEGKLAFDVVEFELEEALCEPFRLNLKLASDKNAIDFKQVLDQPGTFTLWQDGRPARYVHGIVSHFTQGSSGFRRTRYELLLEPQLARLELCCNWRIFQEKSVPEILQALLKEHRVLDYEQRIYHEHLPREYCVQAGDSDHYLHDRLAFEEGLVYYFRFDEHRHTLVCSDRLYVQERIAGGPVLFSAQPEGDNPQPVLHSFRYSENVRTARQTQRDYSFKRPTYDQEHHLAGEALEHQGSSYERYDYPGRYKRSGAGRPFTESRLRGHRRDARVASVSGDDPRLIPGHAFALEGHPRADFNAWWRPVRVVHRGTQYAGQEEESADAPLGVSYDLRAELVPEDVEWRPAPLPRPRIDGPQIATVVGPAGEEIHCDEWGRVKVQFPWDREGRHDEFSTCWIRVAQNWAGADWGHMAIPRIGQEVIVDYLDGDCDQPIVTGRTYRATNRPPYALPDHKILSTIKSKEYKGSRANELRIDDTTAQISAALMSDHGASALHLGYLTHPRPEGGKPRGEGFELRTDEHGAVRAAKGLLLSTEEQLRAGAGHLDRGVVVQVLEAALELARELGDYAGEHQGVGHDAAPQQTLQEAVRDLGHGANDESGKSNGGKPAIALSGPAGIAAATPASLTLAAGEHVDSVARQNQQVTAGQKVVINAGSDIGLFAQGGELRQITHQGPMLLQAQKNDIRLEAKQSVEVSASQQHVLVTAKEHITLMCGGAYLTLKGGNIELGMPGNFVVKAAKHSHVGAASLEAELPQFEVGETQRRFVLKQLDGQTAMPNVPYTITMANGEVIEGVTDAEGATQLLQKDAMNIAKVDMKHTKSPASAVAGIAAAVGAAVAVGKLLGGPDAEAGRALSEGEISLAKGVFGDSIDYSTVRLRDEDYVPWQGKDYVMAPNGHIYFGEELRGVADWSLESLQRQGLFIHEMTHVWQHQHGVNVLLVGAYQQARQFLLGDQYAYRLEPGKTLKDYNIEQQGDIVRDYFLEKNEFGEASANSRFAGVLKNFPTGY.

Positions alanine 268–glycine 291 are disordered. Histidine 935 lines the Zn(2+) pocket. Residue glutamate 936 is part of the active site. Histidine 939 and glutamate 983 together coordinate Zn(2+).

The protein belongs to the VgrG protein family. As to quaternary structure, interacts with Tla3; this interaction promotes Tle3 loading onto VgrG2b. Interacts with host gamma-tubulin ring complex components GCP1 and GCP4. Zn(2+) serves as cofactor.

The protein resides in the secreted. In terms of biological role, part of the H2 type VI secretion system (H2-T6SS) specialized secretion system, which delivers several virulence factors in both prokaryotic and eukaryotic cells during infection. Forms the spike at the tip of the elongating tube probably formed by haemolysin co-regulated protein 2b/Hcp2b. Allows the delivery of the Tle3 antibacterial toxin to target cells where it exerts its toxicity. Additionally, acts directly as an effector and promotes internalization by interacting with the host gamma-tubulin ring complex. Elicits toxicity also in the bacterial periplasm and disrupts bacterial cell morphology. Toxicity is counteracted by a cognate immunity protein. This Pseudomonas aeruginosa (strain ATCC 15692 / DSM 22644 / CIP 104116 / JCM 14847 / LMG 12228 / 1C / PRS 101 / PAO1) protein is Type VI secretion system spike protein VgrG2b (vgrG2b).